The chain runs to 495 residues: Cytochrome P450 monooxygenase FrzC (495 aa).

Residues 8 to 28 (GLVVGLWVTYHILLGTYNVFF) traverse the membrane as a helical segment. Position 437 (C437) interacts with heme.

It belongs to the cytochrome P450 family. Requires heme as cofactor.

It is found in the membrane. It catalyses the reaction (S,S)-2,5-di-(p-hydroxybenzyl)piperazine + reduced [NADPH--hemoprotein reductase] + O2 = (1S,4S)-4-[(4-hydroxyphenyl)methyl]-2,5-diazaspiro[bicyclo[3.2.1]octane-6,1'-cyclohexane]-2',5'-dien-4'-one + oxidized [NADPH--hemoprotein reductase] + 2 H2O + H(+). Its pathway is secondary metabolite biosynthesis. Its function is as follows. Cytochrome P450 monooxygenase; part of the gene cluster that mediates the biosynthesis of the alkaloid (-)-FR901483, a potent immunosuppressant that shows efficacy in animal models and a probable inhibitor of purine nucleotide biosynthesis by targeting phosphoribosylpyrophosphate amidotransferase (PPAT). Within the pathway, FrzC catalyzes the coupling between N10 and C1' to produce a 1,4-diazabicyclo[3.2.1]octane spiro-fused to a 2,5-cyclohexadienone. FrzC probably first catalyzes homolysis of the N-H bond to generate the N10 radical which is followed by an O-H abstraction to give the phenolic radical which can be delocalized to C1'. Radical coupling between N10 and C1' then forms. The biosynthesis of (-)-FR901483 starts with the condensation of two L-tyrosines to yield (S,S)-dityrosyl-piperazine. This process occurs in 3 steps with the non-canonical nonribosomal peptide synthetase FrzA catalyzing the reduction of L-tyrosine into L-tyrosinal, the spontaneous condensation of 2 L-tyrosinal units, and the subsequent reduction by the NmrA-like family domain-containing oxidoreductase FrzB. The cytochrome P450 monooxygenase FrzC then performs coupling between N10 and C1' to morph the piperazine into a 1,4-diazabicyclo[3.2.1]octane spiro-fused to a 2,5-cyclohexadienone. The dienone portion is further reduced to cyclohexanone by the flavin-dependent reductase FrzD. The methyltranserases (MTs) FrzE and FrzF are then involved in the methylation at the C10' amine and the C4 phenolic oxygen, respectively. The order of the two MTs appear to be interchangeable. Cleavage of the C9-N10' bond by the dioxygenase FrzG then leads to formation of a conjugated iminium. In addition to the oxidation of C9, an additional dehydrogenation between C7 and C8 can occur to give a likely shunt product. The next biosynthetic step is the intramolecular aldol condensation catalyzed by the newly identified aldolase FrzH to yield an aza-tricyclic product with the formation of a C9-C3' bond. The short-chain dehydrogenase/reductase FrzI then produces dephospho-(-)-FR901483 that is phosphorylated at C4'-OH into (-)-FR901483 by the phosphotransferase FrzJ. This chain is Cytochrome P450 monooxygenase FrzC, found in Cladobotryum sp.